Here is a 154-residue protein sequence, read N- to C-terminus: NADPH-dependent 7-cyano-7-deazaguanine reductase (154 aa).

The Thioimide intermediate role is filled by Cys52. The Proton donor role is filled by Asp59. Substrate-binding positions include 74–76 and 93–94; these read VES and HE.

This sequence belongs to the GTP cyclohydrolase I family. QueF type 1 subfamily.

The protein resides in the cytoplasm. The catalysed reaction is 7-aminomethyl-7-carbaguanine + 2 NADP(+) = 7-cyano-7-deazaguanine + 2 NADPH + 3 H(+). It functions in the pathway tRNA modification; tRNA-queuosine biosynthesis. Catalyzes the NADPH-dependent reduction of 7-cyano-7-deazaguanine (preQ0) to 7-aminomethyl-7-deazaguanine (preQ1). This is NADPH-dependent 7-cyano-7-deazaguanine reductase from Ruegeria sp. (strain TM1040) (Silicibacter sp.).